The chain runs to 232 residues: MLPRFLWRPVLCSYRALGSPSRSLTVSYRNLSCLALLHKGAFAAPTSRSLFCAERPISTGCTSLQVKDKRVSVQSTSDGAPPQNASHKVKEAGRDFTYFIVVLIGIGVTGGLFYVVFEELFSSSSPSKIYGEALEKCRSHPEVIGAFGEPIKGYGETTRRGRRQHVSHMEFVKDGIKCMRLKFYIEGSEPRKQGTVHIEVKENPASGKYEFQYIFVEIDTYPRRTIIIEDNR.

Residues 1-31 (MLPRFLWRPVLCSYRALGSPSRSLTVSYRNL) constitute a mitochondrion transit peptide. A helical transmembrane segment spans residues 96-116 (FTYFIVVLIGIGVTGGLFYVV).

It belongs to the TIM21 family.

Its subcellular location is the mitochondrion membrane. Its function is as follows. May participate in the translocation of transit peptide-containing proteins across the mitochondrial inner membrane. In Xenopus laevis (African clawed frog), this protein is Mitochondrial import inner membrane translocase subunit Tim21 (timm21).